We begin with the raw amino-acid sequence, 63 residues long: MSYYRSYYGGLGYGYGGFGGWGYGYGCGYGSFRRLGYGCGYGGYGFSCCRPLYYGGYGFSAFY.

Belongs to the KRTAP type 19 family. In terms of assembly, interacts with hair keratins.

In the hair cortex, hair keratin intermediate filaments are embedded in an interfilamentous matrix, consisting of hair keratin-associated proteins (KRTAP), which are essential for the formation of a rigid and resistant hair shaft through their extensive disulfide bond cross-linking with abundant cysteine residues of hair keratins. The matrix proteins include the high-sulfur and high-glycine-tyrosine keratins. In Homo sapiens (Human), this protein is Keratin-associated protein 19-8 (KRTAP19-8).